Consider the following 579-residue polypeptide: Probable cytochrome c oxidase subunit 1-alpha (579 aa).

Residues 1 to 21 (MSILNEPQGAAAAEDSYENEL) form a disordered region. The helical transmembrane segment at 44 to 64 (IGTLYLVTSFAFFCIGGVMAL) threads the bilayer. His-90 contributes to the Fe(II)-heme a binding site. The next 6 membrane-spanning stretches (helical) occupy residues 93–113 (IMLL…IMPL), 125–145 (LNMF…GGFL), 174–194 (MWIM…VNFI), 217–237 (VLLT…ALFA), 262–282 (LFWF…FGII), and 295–315 (FGYM…VTVW). Cu cation contacts are provided by His-268 and Tyr-272. Residues 268-272 (HPEVY) constitute a cross-link (1'-histidyl-3'-tyrosine (His-Tyr)). 2 residues coordinate Cu cation: His-317 and His-318. 5 helical membrane passes run 319-339 (MYVT…LIAV), 363-383 (MLWA…GVIL), 397-417 (FVVA…MFSG), 437-457 (ITFW…HWLG), and 480-500 (ISTI…YNVW). His-401 lines the heme a3 pocket. His-403 is a Fe(II)-heme a binding site.

This sequence belongs to the heme-copper respiratory oxidase family. Associates with subunits II, III and IV to form cytochrome c oxidase. Cu(2+) serves as cofactor. Heme is required as a cofactor.

The protein resides in the cell membrane. It catalyses the reaction 4 Fe(II)-[cytochrome c] + O2 + 8 H(+)(in) = 4 Fe(III)-[cytochrome c] + 2 H2O + 4 H(+)(out). The protein operates within energy metabolism; oxidative phosphorylation. In terms of biological role, cytochrome c oxidase is the component of the respiratory chain that catalyzes the reduction of oxygen to water. Subunits 1-3 form the functional core of the enzyme complex. CO I is the catalytic subunit of the enzyme. Electrons originating in cytochrome c are transferred via the copper A center of subunit 2 and heme A of subunit 1 to the bimetallic center formed by heme A3 and copper B. The polypeptide is Probable cytochrome c oxidase subunit 1-alpha (ctaD1) (Streptomyces avermitilis (strain ATCC 31267 / DSM 46492 / JCM 5070 / NBRC 14893 / NCIMB 12804 / NRRL 8165 / MA-4680)).